A 242-amino-acid chain; its full sequence is MKTFHGPTFGTAVFLYLLLFLTSALEEGEITSKVKFPPSSSPSFPRLVMVGTLPDLQEITLCYWFKVNHLKSTLTIFSYNTAKNDNELLTSLEKQGAFHMNVHGAPQLKVQCPNKIHIGKWHHVCHTWSSWEGEATIGVDGFHCKGNATGIAMGVTLSQGGLVVLGQEQDSVGGEYDAEQSLEGELSELNLWNTVLNHEQIKHLSKCAHPSERHIHGNIIQWDKTQFQAYDGVVLSPNEICA.

An N-terminal signal peptide occupies residues 1-24 (MKTFHGPTFGTAVFLYLLLFLTSA). The region spanning 30-241 (ITSKVKFPPS…GVVLSPNEIC (212 aa)) is the Pentraxin (PTX) domain. Residues T60 and Y63 each contribute to the phosphocholine site. Cystine bridges form between C62-C125 and C112-C144. Residues D85 and N86 each contribute to the Ca(2+) site. An N-linked (GlcNAc...) asparagine glycan is attached at N147. Residues E168, Q169, D170, and Q180 each contribute to the Ca(2+) site. C207 and C241 are disulfide-bonded.

This sequence belongs to the pentraxin family. Homopentamer. Pentraxin (or pentaxin) have a discoid arrangement of 5 non-covalently bound subunits. It depends on Ca(2+) as a cofactor.

The protein resides in the secreted. In terms of biological role, might serve the role of immunoglobulins. This Limulus polyphemus (Atlantic horseshoe crab) protein is C-reactive protein 1.4.